Consider the following 1005-residue polypeptide: DNA polymerase (1005 aa).

This sequence belongs to the DNA polymerase type-B family. As to quaternary structure, interacts with OPG148. Component of the Uracil-DNA glycosylase(UDG)-OPG148-polymerase complex; OPG148 and OPG116/UDG form a heterodimeric processivity factor that associates with OPG071 to form the processive polymerase holoenzyme.

The enzyme catalyses DNA(n) + a 2'-deoxyribonucleoside 5'-triphosphate = DNA(n+1) + diphosphate. In terms of biological role, catalyzes DNA synthesis. Acquires processivity by associating with a heterodimeric processivity factor comprised of the viral OPG148 and OPG116 proteins, thereby forming the DNA polymerase holoenzyme. Displays 3'- to 5' exonuclease activity. Might participate in viral DNA recombination. Does not perform OPG116/D4synthesis across an abasic site. This chain is DNA polymerase (OPG071), found in Variola virus.